Consider the following 627-residue polypeptide: UvrABC system protein C (627 aa).

Residues 26–105 enclose the GIY-YIG domain; the sequence is PEPGVYFMRD…IKQHQPYFNV (80 aa). The UVR domain occupies 215 to 250; sequence QELIDILSEQMEKAAEALNFEVAARIRDQIAGLKSL.

Belongs to the UvrC family. In terms of assembly, interacts with UvrB in an incision complex.

Its subcellular location is the cytoplasm. The UvrABC repair system catalyzes the recognition and processing of DNA lesions. UvrC both incises the 5' and 3' sides of the lesion. The N-terminal half is responsible for the 3' incision and the C-terminal half is responsible for the 5' incision. This is UvrABC system protein C from Nostoc sp. (strain PCC 7120 / SAG 25.82 / UTEX 2576).